The sequence spans 631 residues: Transmembrane and coiled-coil domain-containing protein 4 (631 aa).

Residues methionine 1 to leucine 27 form a disordered region. The stretch at phenylalanine 156 to lysine 183 forms a coiled coil. 3 helical membrane passes run valine 200–isoleucine 220, leucine 228–leucine 248, and leucine 343–isoleucine 363. Residues aspartate 555–alanine 595 form a disordered region. Polar residues predominate over residues lysine 568–threonine 594.

It belongs to the TMCO4 family.

The protein resides in the membrane. The protein is Transmembrane and coiled-coil domain-containing protein 4 (Tmco4) of Mus musculus (Mouse).